A 1161-amino-acid chain; its full sequence is ATP-dependent helicase/deoxyribonuclease subunit B (1161 aa).

The protein belongs to the helicase family. AddB/RexB type 2 subfamily. In terms of assembly, heterodimer of AddA and RexB. Mg(2+) is required as a cofactor.

Functionally, the heterodimer acts as both an ATP-dependent DNA helicase and an ATP-dependent, dual-direction single-stranded exonuclease. Recognizes the chi site generating a DNA molecule suitable for the initiation of homologous recombination. This subunit has 5' -&gt; 3' nuclease activity but not helicase activity. The protein is ATP-dependent helicase/deoxyribonuclease subunit B of Oenococcus oeni (strain ATCC BAA-331 / PSU-1).